The following is a 712-amino-acid chain: DNA ligase (712 aa).

Positions 1–22 are disordered; sequence MVQKNEHQGGQSQHSLFAAGPT. NAD(+) contacts are provided by residues 53-57 and Asp138; that span reads DDQFD. The active-site N6-AMP-lysine intermediate is Lys140. Residues Arg161, Glu199, Lys318, and Lys342 each coordinate NAD(+). Cys436, Cys439, Cys454, and Cys459 together coordinate Zn(2+). Residues 612–631 are disordered; sequence RGGRSGGGSSGSTGEGGLAS. Gly residues predominate over residues 614–630; that stretch reads GRSGGGSSGSTGEGGLA. In terms of domain architecture, BRCT spans 629-712; that stretch reads LASGPLAGKN…MLREAKAASE (84 aa).

Belongs to the NAD-dependent DNA ligase family. LigA subfamily. Mg(2+) serves as cofactor. The cofactor is Mn(2+).

The catalysed reaction is NAD(+) + (deoxyribonucleotide)n-3'-hydroxyl + 5'-phospho-(deoxyribonucleotide)m = (deoxyribonucleotide)n+m + AMP + beta-nicotinamide D-nucleotide.. Functionally, DNA ligase that catalyzes the formation of phosphodiester linkages between 5'-phosphoryl and 3'-hydroxyl groups in double-stranded DNA using NAD as a coenzyme and as the energy source for the reaction. It is essential for DNA replication and repair of damaged DNA. In Desulfovibrio desulfuricans (strain ATCC 27774 / DSM 6949 / MB), this protein is DNA ligase.